A 280-amino-acid chain; its full sequence is Meiotic driver wtf35 (280 aa).

Residues 1-29 show a composition bias toward basic and acidic residues; sequence MKNKDYPLRTSMDELSTKNDNEIDLEKGP. Disordered regions lie at residues 1-49 and 64-100; these read MKNK…DLNN and NKSTTPPDYDENRLPITDEGNNPPNTHRENHSSGTTD. A run of 4 helical transmembrane segments spans residues 105 to 125, 142 to 162, 184 to 204, and 218 to 238; these read FLIKLLISFTSIILFNAPAVC, WTLIGFWCASSLIIFTFSWYF, IPMAFSEVFLFNILVGSPRVA, and SLADHIIFAILSILVFIVETV.

Belongs to the WTF family. As to quaternary structure, homomer. Forms protein aggregates. The two isoforms can interact with each other and with themselves. High sequence similarity is required for their interaction.

The protein resides in the spore membrane. The protein localises to the vacuole membrane. Its subcellular location is the ascus epiplasm. It localises to the cytoplasm. It is found in the endoplasmic reticulum membrane. Its function is as follows. Promotes unequal transmission of alleles from the parental zygote to progeny spores by acting as poison/antidote system where the poison and antidote proteins are produced from the same locus; the poison component is trans-acting and targets all spores within an ascus whereas the antidote component is spore-specific, leading to poisoning of all progeny that do not inherit the allele. In terms of biological role, localizes isoform 2 to the vacuole thereby facilitating its degradation. Forms toxic aggregates that disrupt spore maturation. The sequence is that of Meiotic driver wtf35 from Schizosaccharomyces pombe (Fission yeast).